Consider the following 224-residue polypeptide: Cytochrome c oxidase subunit 2 (224 aa).

Topologically, residues 1–26 (MSTWGQMNLMDPASPIQIEMMLFHDH) are mitochondrial intermembrane. The chain crosses the membrane as a helical span at residues 27-48 (AMAILIGIFTLVSCLGVKLCFN). Topologically, residues 49-62 (TLSTRTMHEAQLLE) are mitochondrial matrix. The chain crosses the membrane as a helical span at residues 63–82 (TLWTILPAFLLVWLALPSLR). Residues 83–224 (LLYLLDEQSS…DVKDFINMCN (142 aa)) lie on the Mitochondrial intermembrane side of the membrane. His-161, Cys-196, Glu-198, Cys-200, His-204, and Met-207 together coordinate Cu cation. Position 198 (Glu-198) interacts with Mg(2+).

It belongs to the cytochrome c oxidase subunit 2 family. In terms of assembly, component of the cytochrome c oxidase (complex IV, CIV), a multisubunit enzyme composed of a catalytic core of 3 subunits and several supernumerary subunits. The complex exists as a monomer or a dimer and forms supercomplexes (SCs) in the inner mitochondrial membrane with ubiquinol-cytochrome c oxidoreductase (cytochrome b-c1 complex, complex III, CIII). It depends on Cu cation as a cofactor.

The protein resides in the mitochondrion inner membrane. The enzyme catalyses 4 Fe(II)-[cytochrome c] + O2 + 8 H(+)(in) = 4 Fe(III)-[cytochrome c] + 2 H2O + 4 H(+)(out). Its function is as follows. Component of the cytochrome c oxidase, the last enzyme in the mitochondrial electron transport chain which drives oxidative phosphorylation. The respiratory chain contains 3 multisubunit complexes succinate dehydrogenase (complex II, CII), ubiquinol-cytochrome c oxidoreductase (cytochrome b-c1 complex, complex III, CIII) and cytochrome c oxidase (complex IV, CIV), that cooperate to transfer electrons derived from NADH and succinate to molecular oxygen, creating an electrochemical gradient over the inner membrane that drives transmembrane transport and the ATP synthase. Cytochrome c oxidase is the component of the respiratory chain that catalyzes the reduction of oxygen to water. Electrons originating from reduced cytochrome c in the intermembrane space (IMS) are transferred via the dinuclear copper A center (CU(A)) of subunit 2 and heme A of subunit 1 to the active site in subunit 1, a binuclear center (BNC) formed by heme A3 and copper B (CU(B)). The BNC reduces molecular oxygen to 2 water molecules using 4 electrons from cytochrome c in the IMS and 4 protons from the mitochondrial matrix. This chain is Cytochrome c oxidase subunit 2 (COII), found in Albinaria turrita (Door snail).